A 498-amino-acid polypeptide reads, in one-letter code: Probable malate:quinone oxidoreductase (498 aa).

Belongs to the MQO family. FAD serves as cofactor.

It carries out the reaction (S)-malate + a quinone = a quinol + oxaloacetate. It functions in the pathway carbohydrate metabolism; tricarboxylic acid cycle; oxaloacetate from (S)-malate (quinone route): step 1/1. This Prochlorococcus marinus (strain AS9601) protein is Probable malate:quinone oxidoreductase.